Reading from the N-terminus, the 266-residue chain is Dihydropteroate synthase (266 aa).

Positions 12 to 260 (AAIMGILNVT…DVKANQDIVA (249 aa)) constitute a Pterin-binding domain. Asparagine 19 contacts Mg(2+). Residues threonine 59, aspartate 93, asparagine 112, aspartate 176, lysine 212, and 248-250 (RVH) each bind (7,8-dihydropterin-6-yl)methyl diphosphate.

Belongs to the DHPS family. Homodimer or homotrimer. Mg(2+) serves as cofactor.

It carries out the reaction (7,8-dihydropterin-6-yl)methyl diphosphate + 4-aminobenzoate = 7,8-dihydropteroate + diphosphate. It functions in the pathway cofactor biosynthesis; tetrahydrofolate biosynthesis; 7,8-dihydrofolate from 2-amino-4-hydroxy-6-hydroxymethyl-7,8-dihydropteridine diphosphate and 4-aminobenzoate: step 1/2. Catalyzes the condensation of para-aminobenzoate (pABA) with 6-hydroxymethyl-7,8-dihydropterin diphosphate (DHPt-PP) to form 7,8-dihydropteroate (H2Pte), the immediate precursor of folate derivatives. The chain is Dihydropteroate synthase (folP) from Streptococcus pyogenes serotype M18 (strain MGAS8232).